The following is a 132-amino-acid chain: Ribosome-binding factor A (132 aa).

Belongs to the RbfA family. Monomer. Binds 30S ribosomal subunits, but not 50S ribosomal subunits or 70S ribosomes.

It is found in the cytoplasm. Functionally, one of several proteins that assist in the late maturation steps of the functional core of the 30S ribosomal subunit. Associates with free 30S ribosomal subunits (but not with 30S subunits that are part of 70S ribosomes or polysomes). Required for efficient processing of 16S rRNA. May interact with the 5'-terminal helix region of 16S rRNA. This Rhizorhabdus wittichii (strain DSM 6014 / CCUG 31198 / JCM 15750 / NBRC 105917 / EY 4224 / RW1) (Sphingomonas wittichii) protein is Ribosome-binding factor A.